The primary structure comprises 347 residues: NADH-ubiquinone oxidoreductase chain 2 (347 aa).

9 consecutive transmembrane segments (helical) span residues 3 to 23 (PMTF…VMMS), 59 to 79 (YFLT…INLL), 89 to 109 (LINP…LGLA), 150 to 170 (NLNI…WGGL), 178 to 198 (IMAY…MYNP), 201 to 221 (MLLN…LLMI), 237 to 257 (LPLI…LPPL), 276 to 296 (IILS…YTRI), and 326 to 346 (LPLM…TAIL).

It belongs to the complex I subunit 2 family. Core subunit of respiratory chain NADH dehydrogenase (Complex I) which is composed of 45 different subunits. Interacts with TMEM242.

It localises to the mitochondrion inner membrane. It catalyses the reaction a ubiquinone + NADH + 5 H(+)(in) = a ubiquinol + NAD(+) + 4 H(+)(out). In terms of biological role, core subunit of the mitochondrial membrane respiratory chain NADH dehydrogenase (Complex I) which catalyzes electron transfer from NADH through the respiratory chain, using ubiquinone as an electron acceptor. Essential for the catalytic activity and assembly of complex I. The sequence is that of NADH-ubiquinone oxidoreductase chain 2 from Nyctophilus arnhemensis (Northern long-eared bat).